Consider the following 700-residue polypeptide: MAQDVLTDLTKVRNIGIMAHIDAGKTTTTERILFYTGISYKIGEVHDGAATMDWMEQEQERGITITSAATTCFWNDNQINIIDTPGHVDFTVEVERSLRVLDGAVAVFDGKEGVEPQSEQVWRQADKYDVPRICFVNKMDKLGADFYFSVQTMKDRLGANVVPIQLPIGSEGDFEGVVDLVEMKAKVWRGETKLGEKYDTVEIPADLQEKAEEYRTAMIEAVAETDDELMEKYLGGEELTIEEIKSGLRKLTITSAGYPVLCGSAFKNKGVQPMLDAVIDYLPNPLDVPAAEGHVPGKEDEIISRKPSADEPFSGLAFKVATHPFFGKLTYVRVYSGKVDSGSQVVNSTKGKKERLGKLFQMHSNKENPVESASAGHIYAVIGLKDTTTGDTLCDPNQQIVLESMTFPDPVIEVAIEPKTKSDQEKLGTAIQKLAEEDPTFKVHLDQETGQTVIGGMGELHLDILVDRMRREFKVEANVGKPQVAYRETIRRKVEKVEYTHKKQTGGSGQFAKVLIDLEPFTGEDGATYEFENKVTGGRIPREYIPSVDAGAQDAMQYGVLAGYPLVNVKVTLLDGAFHEVDSSEMAFKVAGSQVLKKAAQSAQPVILEPIMAVEVTTPEDYMGDVIGDLNSRRGQIQAMEERSGARVVKAQVPLSEMFGYVGDLRSKTQGRANYSMVFDSYAEVPANVSKEIIAKATGQ.

One can recognise a tr-type G domain in the interval 10–286 (TKVRNIGIMA…AVIDYLPNPL (277 aa)). Residues 19–26 (AHIDAGKT), 83–87 (DTPGH), and 137–140 (NKMD) each bind GTP.

The protein belongs to the TRAFAC class translation factor GTPase superfamily. Classic translation factor GTPase family. EF-G/EF-2 subfamily.

The protein localises to the cytoplasm. Its function is as follows. Catalyzes the GTP-dependent ribosomal translocation step during translation elongation. During this step, the ribosome changes from the pre-translocational (PRE) to the post-translocational (POST) state as the newly formed A-site-bound peptidyl-tRNA and P-site-bound deacylated tRNA move to the P and E sites, respectively. Catalyzes the coordinated movement of the two tRNA molecules, the mRNA and conformational changes in the ribosome. This is Elongation factor G from Mycolicibacterium vanbaalenii (strain DSM 7251 / JCM 13017 / BCRC 16820 / KCTC 9966 / NRRL B-24157 / PYR-1) (Mycobacterium vanbaalenii).